The sequence spans 238 residues: uncharacterized protein (238 aa).

An HTH gntR-type domain is found at 1–68 (MIYKSIAERL…HGSGTYLVRK (68 aa)). Residues 28-47 (EKKLAEEFAVSRMTIRKAID) constitute a DNA-binding region (H-T-H motif).

This is an uncharacterized protein from Escherichia coli (strain K12).